The chain runs to 688 residues: MQVSSLNEVKIYSLSCGKSLPEWLSDRKKRALQKKDVDVRRRIELIQDFEMPTVCTTIKVSKDGQYILATGTYKPRVRCYDTYQLSLKFERCLDSEVVTFEILSDDYSKIVFLHNDRYIEFHSQSGFYYKTRIPKFGRDFSYHYPSCDLYFVGASSEVYRLNLEQGRYLNPLQTDAAENNVCDINTVHGLFATGTIEGRVECWDPRVRKRVGVLDCALNSVTADSEINSLPTISALKFNGALSMAVGTSTGQVLLYDLRSDKPLLVKDHQYGLPIKSVHFQDSLDLVLSADSRIVKMWNKDSGKIFTSLEPEHDLNDVCLYPSSGMILTANESPKMGIYYIPVLGPAPRWCSFLDNLTEELEENPESTVYDDYKFVTKKDLENLGLTHLIGSPFLRAYMHGFFMDIRLYHKVKLMVNPFAYEEYRKDKIRQKIEETRAQRVQLKKLPKVNKELALKLIEEEEEKQKSTLKKKVKSLPNILTDDRFKVMFENPDFQVDEDSEEFRLLNPLVSRISEKRKKQLRLLEQQEQLKNEEEEEPEGKPSDAESSESSDDEKDWVEEVRKQRRLLQQEERVKRQEQLKEDQQTVLKPQFYEIKAGEEFRSFKESATKQKLMNKTLEDRLKLEAKHGTLSVSDTTVGSKQLTFTLKRSEQQKKQQEAEKLHRQERKKLRRSASHLRSRPRRGRPFH.

M1 is modified (N-acetylmethionine). S25 carries the post-translational modification Phosphoserine. WD repeat units lie at residues 50-90, 174-213, 228-266, 270-308, and 310-349; these read EMPT…LKFE, TDAA…RVGV, NSLP…PLLV, QYGL…IFTS, and EPEH…PAPR. Residues 423-476 adopt a coiled-coil conformation; it reads EYRKDKIRQKIEETRAQRVQLKKLPKVNKELALKLIEEEEEKQKSTLKKKVKSL. S475 carries the phosphoserine modification. At T481 the chain carries Phosphothreonine. Coiled coils occupy residues 512–589 and 640–673; these read RISE…TVLK and SKQL…LRRS. S514 is subject to Phosphoserine. Disordered regions lie at residues 528 to 561, 570 to 589, and 644 to 688; these read EQLK…VEEV, QEER…TVLK, and TFTL…RPFH. A compositionally biased stretch (acidic residues) spans 546–557; the sequence is ESSESSDDEKDW. Basic and acidic residues-rich tracts occupy residues 570–584 and 648–663; these read QEER…KEDQ and KRSE…EKLH. Basic residues predominate over residues 664–688; sequence RQERKKLRRSASHLRSRPRRGRPFH.

The protein belongs to the WD repeat NOL10/ENP2 family.

It localises to the nucleus. Its subcellular location is the nucleolus. The polypeptide is Nucleolar protein 10 (Nol10) (Rattus norvegicus (Rat)).